The primary structure comprises 224 residues: Oocyte zinc finger protein XlCOF6.1 (224 aa).

8 C2H2-type zinc fingers span residues 6–28, 34–56, 62–84, 90–112, 118–140, 146–168, 174–196, and 202–224; these read FSCS…CRSH, FHCT…QRYH, FTCF…IRMH, FSCS…QKIH, FSCS…YRTH, FPCP…RRTH, FACS…RLGH, and FSCS…LKSH.

The protein belongs to the krueppel C2H2-type zinc-finger protein family.

The protein localises to the nucleus. May be involved in transcriptional regulation. The sequence is that of Oocyte zinc finger protein XlCOF6.1 from Xenopus laevis (African clawed frog).